The following is a 426-amino-acid chain: 3-phosphoshikimate 1-carboxyvinyltransferase (426 aa).

The 3-phosphoshikimate site is built by lysine 22, serine 23, and arginine 27. Lysine 22 contributes to the phosphoenolpyruvate binding site. Glycine 96 and arginine 124 together coordinate phosphoenolpyruvate. 3-phosphoshikimate is bound by residues serine 170, serine 171, glutamine 172, serine 198, aspartate 314, asparagine 337, and lysine 341. Residue glutamine 172 coordinates phosphoenolpyruvate. Residue aspartate 314 is the Proton acceptor of the active site. Positions 345, 387, and 412 each coordinate phosphoenolpyruvate.

This sequence belongs to the EPSP synthase family. In terms of assembly, monomer.

It is found in the cytoplasm. It catalyses the reaction 3-phosphoshikimate + phosphoenolpyruvate = 5-O-(1-carboxyvinyl)-3-phosphoshikimate + phosphate. It participates in metabolic intermediate biosynthesis; chorismate biosynthesis; chorismate from D-erythrose 4-phosphate and phosphoenolpyruvate: step 6/7. Catalyzes the transfer of the enolpyruvyl moiety of phosphoenolpyruvate (PEP) to the 5-hydroxyl of shikimate-3-phosphate (S3P) to produce enolpyruvyl shikimate-3-phosphate and inorganic phosphate. This Shewanella baltica (strain OS185) protein is 3-phosphoshikimate 1-carboxyvinyltransferase.